We begin with the raw amino-acid sequence, 246 residues long: Bis(5'-nucleosyl)-tetraphosphatase PrpE [asymmetrical] (246 aa).

It belongs to the PrpE family. Requires Ni(2+) as cofactor.

It carries out the reaction P(1),P(4)-bis(5'-guanosyl) tetraphosphate + H2O = GMP + GTP + 2 H(+). Its function is as follows. Asymmetrically hydrolyzes Ap4p to yield AMP and ATP. The polypeptide is Bis(5'-nucleosyl)-tetraphosphatase PrpE [asymmetrical] (Bacillus cereus (strain AH820)).